A 513-amino-acid chain; its full sequence is Cobyric acid synthase (513 aa).

The GATase cobBQ-type domain maps to 252 to 457 (KIDIAVIRLP…LHGIFDEEGI (206 aa)). The active-site Nucleophile is Cys-333. The active site involves His-449.

The protein belongs to the CobB/CobQ family. CobQ subfamily.

It participates in cofactor biosynthesis; adenosylcobalamin biosynthesis. Its function is as follows. Catalyzes amidations at positions B, D, E, and G on adenosylcobyrinic A,C-diamide. NH(2) groups are provided by glutamine, and one molecule of ATP is hydrogenolyzed for each amidation. This is Cobyric acid synthase from Lachnoclostridium phytofermentans (strain ATCC 700394 / DSM 18823 / ISDg) (Clostridium phytofermentans).